Reading from the N-terminus, the 661-residue chain is uncharacterized protein (661 aa).

Residues 25–52 (LLPSEPPVGDMNNEDSDTNTSITQSPTN) form a disordered region. A compositionally biased stretch (polar residues) spans 42-52 (TNTSITQSPTN). One can recognise an SANT domain in the interval 246-297 (SMPDIWNEEQHSIFVQQFILHGKKFGKIAEAVPGKNSKECVLHYYLTKRTTD). Disordered regions lie at residues 306–329 (TKTK…KSKG), 478–499 (YYEP…TRKE), 548–570 (PMKM…TFQL), and 604–633 (RIDE…PNSQ). Residues 308–328 (TKGRRRKKLLPSQRGGKKKSK) are compositionally biased toward basic residues. Residues 478–487 (YYEPKLEQHS) are compositionally biased toward basic and acidic residues. The span at 604-617 (RIDELSVEDQEHTT) shows a compositional bias: basic and acidic residues.

Its subcellular location is the nucleus. This is an uncharacterized protein from Schizosaccharomyces pombe (strain 972 / ATCC 24843) (Fission yeast).